The following is a 236-amino-acid chain: tRNA1(Val) (adenine(37)-N6)-methyltransferase (236 aa).

Belongs to the methyltransferase superfamily. tRNA (adenine-N(6)-)-methyltransferase family.

The protein resides in the cytoplasm. It carries out the reaction adenosine(37) in tRNA1(Val) + S-adenosyl-L-methionine = N(6)-methyladenosine(37) in tRNA1(Val) + S-adenosyl-L-homocysteine + H(+). Specifically methylates the adenine in position 37 of tRNA(1)(Val) (anticodon cmo5UAC). In Histophilus somni (strain 2336) (Haemophilus somnus), this protein is tRNA1(Val) (adenine(37)-N6)-methyltransferase.